The sequence spans 124 residues: Small ribosomal subunit protein bS6 (124 aa).

The segment at 96–124 (ETGPSPMMKEVQREEAKKAAAAQPAEAQA) is disordered. Low complexity predominate over residues 114–124 (AAAAQPAEAQA).

Belongs to the bacterial ribosomal protein bS6 family.

Its function is as follows. Binds together with bS18 to 16S ribosomal RNA. In Burkholderia orbicola (strain AU 1054), this protein is Small ribosomal subunit protein bS6.